The following is a 423-amino-acid chain: Imidazolonepropionase (423 aa).

Fe(3+) contacts are provided by H78 and H80. 2 residues coordinate Zn(2+): H78 and H80. 4-imidazolone-5-propanoate-binding residues include R87, Y150, and H183. Y150 provides a ligand contact to N-formimidoyl-L-glutamate. H247 lines the Fe(3+) pocket. Zn(2+) is bound at residue H247. E250 provides a ligand contact to 4-imidazolone-5-propanoate. Fe(3+) is bound at residue D322. D322 contacts Zn(2+). Positions 324 and 326 each coordinate N-formimidoyl-L-glutamate. S327 is a binding site for 4-imidazolone-5-propanoate.

It belongs to the metallo-dependent hydrolases superfamily. HutI family. Zn(2+) serves as cofactor. Requires Fe(3+) as cofactor.

Its subcellular location is the cytoplasm. The catalysed reaction is 4-imidazolone-5-propanoate + H2O = N-formimidoyl-L-glutamate. The protein operates within amino-acid degradation; L-histidine degradation into L-glutamate; N-formimidoyl-L-glutamate from L-histidine: step 3/3. In terms of biological role, catalyzes the hydrolytic cleavage of the carbon-nitrogen bond in imidazolone-5-propanoate to yield N-formimidoyl-L-glutamate. It is the third step in the universal histidine degradation pathway. This chain is Imidazolonepropionase, found in Bacillus cereus (strain G9842).